A 319-amino-acid polypeptide reads, in one-letter code: Zinc metalloproteinase/disintegrin (319 aa).

The propeptide occupies 1 to 28 (EDEAPKMCGVTQNWESYEPIKKASQSNL). Positions 34-230 (RYIELVIVAD…QKPQCILNKP (197 aa)) constitute a Peptidase M12B domain. Ca(2+)-binding residues include E37 and D121. 3 disulfide bridges follow: C145/C225, C185/C209, and C187/C192. H170 contributes to the Zn(2+) binding site. E171 is a catalytic residue. 2 residues coordinate Zn(2+): H174 and H180. Residues C225 and N228 each contribute to the Ca(2+) site. The propeptide occupies 231-246 (LRTDTVSTPVSGNELL). Residues 238-319 (TPVSGNELLE…AGCPRNPFHA (82 aa)) enclose the Disintegrin domain. 6 disulfides stabilise this stretch: C252-C267, C254-C262, C261-C284, C275-C281, C280-C305, and C293-C312. Positions 297–299 (RGD) match the Cell attachment site motif.

The protein belongs to the venom metalloproteinase (M12B) family. P-II subfamily. P-IIa sub-subfamily. Monomer. Zn(2+) is required as a cofactor. In terms of tissue distribution, expressed by the venom gland.

The protein localises to the secreted. With respect to regulation, excess of calcium ions significantly suppress the autoproteolysis of the enzyme. In terms of biological role, metalloproteinase that impairs hemostasis in the envenomed animal. Shows autoproteolysis dependent on pH and temperature. Does not show hemorrhagic activity. Functionally, inhibits platelet aggregation induced by ADP (IC(50) is 200 nM), collagen (IC(50) is 500 nM), thrombin and epinephrin (IC(50) is 300 nM). Does not inhibit aggregation induced by ristocetin. Its function is as follows. Inhibits platelet aggregation induced by ADP (IC(50) is 100 nM), collagen (IC(50) is 500 nM), thrombin and epinephrin (IC(50) is 300 nM). Does not inhibit aggregation induced by ristocetin. Significantly inhibits angiogenesis both in vivo and in vitro. This chain is Zinc metalloproteinase/disintegrin, found in Gloydius brevicauda (Korean slamosa snake).